We begin with the raw amino-acid sequence, 416 residues long: Gamma-glutamyl phosphate reductase (416 aa).

It belongs to the gamma-glutamyl phosphate reductase family.

The protein resides in the cytoplasm. The enzyme catalyses L-glutamate 5-semialdehyde + phosphate + NADP(+) = L-glutamyl 5-phosphate + NADPH + H(+). Its pathway is amino-acid biosynthesis; L-proline biosynthesis; L-glutamate 5-semialdehyde from L-glutamate: step 2/2. Functionally, catalyzes the NADPH-dependent reduction of L-glutamate 5-phosphate into L-glutamate 5-semialdehyde and phosphate. The product spontaneously undergoes cyclization to form 1-pyrroline-5-carboxylate. The sequence is that of Gamma-glutamyl phosphate reductase from Vibrio atlanticus (strain LGP32) (Vibrio splendidus (strain Mel32)).